The chain runs to 409 residues: Phosphatidylserine decarboxylase proenzyme, mitochondrial (409 aa).

Residues 1–52 (MAASVCRPYVRSLPGVMPWRSSSCHYEYTAMHHFLGSFQKLPFEPFNTGARK) constitute a mitochondrion transit peptide. Residues 53–63 (IHTAPVRSLFL) are Mitochondrial matrix-facing. Residues 64-82 (LRPVPILLATGGGYAGYRQ) traverse the membrane as a helical segment. Residues 83–409 (YEKYRDQKLE…IRFGEALGSL (327 aa)) are Mitochondrial intermembrane-facing. Catalysis depends on charge relay system; for autoendoproteolytic cleavage activity residues Asp191, His267, and Ser378. Ser378 acts as the Schiff-base intermediate with substrate; via pyruvic acid; for decarboxylase activity in catalysis. Ser378 is subject to Pyruvic acid (Ser); by autocatalysis.

Belongs to the phosphatidylserine decarboxylase family. PSD-B subfamily. Eukaryotic type I sub-subfamily. Heterodimer of a large membrane-associated beta subunit and a small pyruvoyl-containing alpha subunit. Pyruvate is required as a cofactor. Is synthesized initially as an inactive proenzyme. Formation of the active enzyme involves a self-maturation process in which the active site pyruvoyl group is generated from an internal serine residue via an autocatalytic post-translational modification. Two non-identical subunits are generated from the proenzyme in this reaction, and the pyruvate is formed at the N-terminus of the alpha chain, which is derived from the carboxyl end of the proenzyme. The autoendoproteolytic cleavage occurs by a canonical serine protease mechanism, in which the side chain hydroxyl group of the serine supplies its oxygen atom to form the C-terminus of the beta chain, while the remainder of the serine residue undergoes an oxidative deamination to produce ammonia and the pyruvoyl prosthetic group on the alpha chain. During this reaction, the Ser that is part of the protease active site of the proenzyme becomes the pyruvoyl prosthetic group, which constitutes an essential element of the active site of the mature decarboxylase.

It localises to the mitochondrion inner membrane. Its subcellular location is the cytoplasm. The protein localises to the lipid droplet. The enzyme catalyses a 1,2-diacyl-sn-glycero-3-phospho-L-serine + H(+) = a 1,2-diacyl-sn-glycero-3-phosphoethanolamine + CO2. It participates in phospholipid metabolism; phosphatidylethanolamine biosynthesis. In terms of biological role, catalyzes the formation of phosphatidylethanolamine (PtdEtn) from phosphatidylserine (PtdSer). Plays a central role in phospholipid metabolism and in the interorganelle trafficking of phosphatidylserine. May be involved in lipid droplet biogenesis at the endoplasmic reticulum membrane. This chain is Phosphatidylserine decarboxylase proenzyme, mitochondrial, found in Cricetulus griseus (Chinese hamster).